The primary structure comprises 451 residues: Tubulin alpha chain (451 aa).

Q11 provides a ligand contact to GTP. Position 40 is an N6-acetyllysine (K40). GTP-binding residues include E71, G144, T145, T179, N206, and N228. E71 is a Mg(2+) binding site. E254 is an active-site residue.

The protein belongs to the tubulin family. Dimer of alpha and beta chains. A typical microtubule is a hollow water-filled tube with an outer diameter of 25 nm and an inner diameter of 15 nM. Alpha-beta heterodimers associate head-to-tail to form protofilaments running lengthwise along the microtubule wall with the beta-tubulin subunit facing the microtubule plus end conferring a structural polarity. Microtubules usually have 13 protofilaments but different protofilament numbers can be found in some organisms and specialized cells. Mg(2+) is required as a cofactor. Undergoes a tyrosination/detyrosination cycle, the cyclic removal and re-addition of a C-terminal tyrosine residue by the enzymes tubulin tyrosine carboxypeptidase (TTCP) and tubulin tyrosine ligase (TTL), respectively. Post-translationally, acetylation of alpha chains at Lys-40 stabilizes microtubules and affects affinity and processivity of microtubule motors. This modification has a role in multiple cellular functions, ranging from cell motility, cell cycle progression or cell differentiation to intracellular trafficking and signaling.

The protein resides in the cytoplasm. It is found in the cytoskeleton. The catalysed reaction is GTP + H2O = GDP + phosphate + H(+). Functionally, tubulin is the major constituent of microtubules, a cylinder consisting of laterally associated linear protofilaments composed of alpha- and beta-tubulin heterodimers. Microtubules grow by the addition of GTP-tubulin dimers to the microtubule end, where a stabilizing cap forms. Below the cap, tubulin dimers are in GDP-bound state, owing to GTPase activity of alpha-tubulin. The polypeptide is Tubulin alpha chain (TUBA) (Euglena gracilis).